Consider the following 180-residue polypeptide: ATP-dependent protease subunit HslV (180 aa).

Thr-5 is an active-site residue. Gly-165, Cys-168, and Thr-171 together coordinate Na(+).

This sequence belongs to the peptidase T1B family. HslV subfamily. A double ring-shaped homohexamer of HslV is capped on each side by a ring-shaped HslU homohexamer. The assembly of the HslU/HslV complex is dependent on binding of ATP.

It is found in the cytoplasm. It catalyses the reaction ATP-dependent cleavage of peptide bonds with broad specificity.. Allosterically activated by HslU binding. In terms of biological role, protease subunit of a proteasome-like degradation complex believed to be a general protein degrading machinery. The protein is ATP-dependent protease subunit HslV of Helicobacter pylori (strain ATCC 700392 / 26695) (Campylobacter pylori).